A 99-amino-acid polypeptide reads, in one-letter code: RNA-binding protein Hfq (99 aa).

Residues 9–68 form the Sm domain; sequence DPFLNALRRERVPVSIYLVNGIKLQGQIESFDQFVILLKNTVSQMVYKHAISTVVPSRPV. Residues 64 to 99 form a disordered region; that stretch reads PSRPVSHHSNNPGGSNNYHGSNTTAQQQSQDADDAE. A compositionally biased stretch (low complexity) spans 70–93; it reads HHSNNPGGSNNYHGSNTTAQQQSQ.

Belongs to the Hfq family. Homohexamer.

RNA chaperone that binds small regulatory RNA (sRNAs) and mRNAs to facilitate mRNA translational regulation in response to envelope stress, environmental stress and changes in metabolite concentrations. Also binds with high specificity to tRNAs. The polypeptide is RNA-binding protein Hfq (Pectobacterium atrosepticum (strain SCRI 1043 / ATCC BAA-672) (Erwinia carotovora subsp. atroseptica)).